Reading from the N-terminus, the 208-residue chain is MSDSAVVAAAVEPKVPKAKAAKAAKPTKVAKAKAPVAHPPYINMIKEAIKQLKDRKGASKQAILKFISQNYKLGDNVIQINAHLRQALKRGVTSKALVQAAGSGANGRFRVPEKAAAAKKPAAAKKPAAAKKPAAAKKATGEKKAKKPAAAKPKKAATGDKKVKKAKSPKKVAKPAAKKVAKSPAKKAAPKKIAKPAAKKAAKPAAKA.

Position 2 is an N-acetylserine (Ser2). Residue Lys14 is modified to N6-methyllysine. One can recognise an H15 domain in the interval 37–113 (AHPPYINMIK…GANGRFRVPE (77 aa)). Residues 101-208 (AGSGANGRFR…KKAAKPAAKA (108 aa)) form a disordered region. Low complexity predominate over residues 114-138 (KAAAAKKPAAAKKPAAAKKPAAAKK). Composition is skewed to basic residues over residues 144-155 (KAKKPAAAKPKK) and 162-202 (KVKK…KKAA).

This sequence belongs to the histone H1/H5 family. Interacts with nmad-1. Interacts (when monomethylated at Lys-14) with chromobox protein homolog hpl-1; the interaction is direct. Interacts (when monomethylated at Lys-14) with histone H3 (when trimethylated on 'Lys-27'); the interaction is direct. In terms of processing, methylation at lysine 14 is necessary to regulate male tail development.

The protein resides in the nucleus. It localises to the chromosome. It is found in the cytoplasm. Histones H1 are necessary for the condensation of nucleosome chains into higher-order structures. Probably does not act as global transcriptional repressor. Acting in concert with chromobox protein homologs hpl-1 and hpl-2, involved in reproduction, somatic gonad development, male tail development, and vulval cell fate decisions; perhaps as a result of modulating expression of Hox genes mab-5 and egl-5. Plays a role in linking epigenetic regulation with the innate immune response. The chain is Histone 24 from Caenorhabditis elegans.